A 309-amino-acid chain; its full sequence is Uridylate-specific endoribonuclease C (309 aa).

The N-terminal stretch at 1–22 is a signal peptide; sequence MASGYDFGWIPVLLSLFTLTDA. The 277-residue stretch at 27-303 folds into the EndoU domain; it reads VNQELSNIFN…IGTAYPKLLS (277 aa). 2 N-linked (GlcNAc...) asparagine glycosylation sites follow: asparagine 53 and asparagine 121. Catalysis depends on residues histidine 181, histidine 197, and lysine 242.

This sequence belongs to the ENDOU family. As to quaternary structure, monomer. Mn(2+) is required as a cofactor.

It localises to the secreted. It catalyses the reaction ribonucleotidyl-uridine-RNA = a 5'-end dephospho-uridine-RNA + a 3'-end 2',3'-cyclophospho-ribonucleotide-RNA. In terms of biological role, endoribonuclease that cleaves single-stranded RNAs at 5' of uridylates and releases a product with a 2',3'-cyclic phosphate at the 3'-end. The UU and GU sites are more efficiently cleaved than CU and AU sites. The chain is Uridylate-specific endoribonuclease C (endouc) from Danio rerio (Zebrafish).